A 75-amino-acid chain; its full sequence is Penaeidin-3k (75 aa).

Residues 1–19 form the signal peptide; sequence MRLVVCLVFLASFALVCQG. Gln-20 carries the pyrrolidone carboxylic acid modification. Cystine bridges form between Cys-44–Cys-59, Cys-48–Cys-66, and Cys-60–Cys-67. Ser-74 is subject to Serine amide.

The protein belongs to the penaeidin family.

Its subcellular location is the cytoplasmic granule. Antibacterial and antifungal activity. Presents chitin-binding activity. In Penaeus setiferus (Atlantic white shrimp), this protein is Penaeidin-3k.